A 458-amino-acid polypeptide reads, in one-letter code: Phosphomethylpyrimidine synthase (458 aa).

Residues Asn-80, Met-109, Tyr-139, His-175, Ser-195–Gly-197, Asp-236–Arg-239, and Glu-275 each bind substrate. His-279 provides a ligand contact to Zn(2+). A substrate-binding site is contributed by Tyr-302. Zn(2+) is bound at residue His-343. [4Fe-4S] cluster-binding residues include Cys-423, Cys-426, and Cys-431.

The protein belongs to the ThiC family. The cofactor is [4Fe-4S] cluster.

The catalysed reaction is 5-amino-1-(5-phospho-beta-D-ribosyl)imidazole + S-adenosyl-L-methionine = 4-amino-2-methyl-5-(phosphooxymethyl)pyrimidine + CO + 5'-deoxyadenosine + formate + L-methionine + 3 H(+). Its pathway is cofactor biosynthesis; thiamine diphosphate biosynthesis. Its function is as follows. Catalyzes the synthesis of the hydroxymethylpyrimidine phosphate (HMP-P) moiety of thiamine from aminoimidazole ribotide (AIR) in a radical S-adenosyl-L-methionine (SAM)-dependent reaction. This is Phosphomethylpyrimidine synthase from Acaryochloris marina (strain MBIC 11017).